We begin with the raw amino-acid sequence, 418 residues long: Tyrosine--tRNA ligase (418 aa).

Y34 contacts L-tyrosine. The 'HIGH' region motif lies at 39-48; that stretch reads PTADSLHLGH. 2 residues coordinate L-tyrosine: Y169 and Q173. Positions 229 to 233 match the 'KMSKS' region motif; the sequence is KFGKS. An ATP-binding site is contributed by K232. The S4 RNA-binding domain occupies 352-410; it reads LNIVELLVTSGIVNSKRQAREDVQNGAIYVNGERVQDLDYTLSDSDKIDGELTVIRRGK.

Belongs to the class-I aminoacyl-tRNA synthetase family. TyrS type 1 subfamily. In terms of assembly, homodimer.

Its subcellular location is the cytoplasm. It catalyses the reaction tRNA(Tyr) + L-tyrosine + ATP = L-tyrosyl-tRNA(Tyr) + AMP + diphosphate + H(+). Catalyzes the attachment of tyrosine to tRNA(Tyr) in a two-step reaction: tyrosine is first activated by ATP to form Tyr-AMP and then transferred to the acceptor end of tRNA(Tyr). In Streptococcus suis (strain 98HAH33), this protein is Tyrosine--tRNA ligase.